The following is a 540-amino-acid chain: L-aspartate oxidase (540 aa).

FAD contacts are provided by residues 16 to 19 (SGAA), Lys-38, 45 to 52 (STFYAQGG), and Asp-223. The active-site Proton donor/acceptor is Arg-290. FAD contacts are provided by residues Glu-375 and 391–392 (SL).

It belongs to the FAD-dependent oxidoreductase 2 family. NadB subfamily. It depends on FAD as a cofactor.

It is found in the cytoplasm. The catalysed reaction is L-aspartate + O2 = iminosuccinate + H2O2. It functions in the pathway cofactor biosynthesis; NAD(+) biosynthesis; iminoaspartate from L-aspartate (oxidase route): step 1/1. Functionally, catalyzes the oxidation of L-aspartate to iminoaspartate, the first step in the de novo biosynthesis of NAD(+). This is L-aspartate oxidase (nadB) from Salmonella typhimurium (strain LT2 / SGSC1412 / ATCC 700720).